Consider the following 969-residue polypeptide: Defective in germ line development protein 3 (969 aa).

The interval 34 to 81 is gld-2-binding; it reads MAENAASARKLFVSSALKDIIVNPENFYHDFQQSAQMAEDANQRRQVS. 5 consecutive KH domains span residues 34–109, 113–187, 189–259, 270–342, and 344–419; these read MAEN…MIEI, RVTL…MRRN, HFTV…NEIL, FTLH…IMDL, and PISM…YQKV. A gls-1-binding region spans residues 57–471; sequence PENFYHDFQQ…GSNGRRHRSS (415 aa). Disordered stretches follow at residues 459–508 and 602–711; these read LSDG…SFSE and EQHR…GDIH. The span at 487-508 shows a compositional bias: polar residues; the sequence is KQFSESSGGPSRSHTRVSSFSE. Residues 631 to 644 are compositionally biased toward low complexity; sequence PSSSTGSYYPSTTP. The span at 647 to 659 shows a compositional bias: basic and acidic residues; sequence RVYEQVREDDLRS. The span at 664 to 676 shows a compositional bias: polar residues; sequence RRTSVNGDDQNVE. Basic and acidic residues-rich tracts occupy residues 677-687 and 694-711; these read SMHDQGYERQY and LQKDDQQRWKTGSRGDIH. The tract at residues 769–969 is gls-1-binding; sequence LYMHESPHND…DLSLDETSTY (201 aa). Residues 860 to 949 form a fbf-1-binding region; it reads NGVTKTILEP…VLNEKEKEIA (90 aa). The interval 950-969 is disordered; that stretch reads DKSIESTVTQDLSLDETSTY. Residues 954 to 969 show a composition bias toward polar residues; the sequence is ESTVTQDLSLDETSTY.

Interacts (via its KH1 domain) with gld-2. Isoform A but not isoform B interacts specifically with fbf-1 and fbf-2 in an RNA-independent manner. Isoform A interacts with gls-1 isoform C. In terms of tissue distribution, expressed in the germline (at protein level). In adult hermaphrodites, first detected in the transition zone (TZ), weakly expressed in the early mitotic region and in pachytene germ cells, and becomes more abundantly expressed as germ cells enter diakinesis (at protein level). Expressed in primary spermatocytes, but not in secondary spermatocytes or adult sperm (at protein level).

It localises to the cytoplasm. Its subcellular location is the cytoplasmic granule. It is found in the perinuclear region. Functionally, required maternally for germline survival and embryogenesis. Forms a complex with gls-1 which promotes the oogenic cell fate by freeing the translational repressor fbf to repress sperm promoting factors. Promotes maturation of primary spermatocytes to mature sperm. Required during hermaphrodite development to promote sperm fate, which is critical for determining the normal number of sperm. Promotion of sperm fate is at the expense of oogenesis, possibly through the negative regulation of fbf. Required during male development for the continued production of sperm and inhibition of oogenesis. Together with gld-2, promotes the transition from mitosis to meiosis. Required for polyadenylation of neg-1 mRNA during embryogenesis. In Caenorhabditis elegans, this protein is Defective in germ line development protein 3.